Consider the following 232-residue polypeptide: 2,3,4,5-tetrahydropyridine-2,6-dicarboxylate N-acetyltransferase (232 aa).

The protein belongs to the transferase hexapeptide repeat family. DapH subfamily.

It carries out the reaction (S)-2,3,4,5-tetrahydrodipicolinate + acetyl-CoA + H2O = L-2-acetamido-6-oxoheptanedioate + CoA. Its pathway is amino-acid biosynthesis; L-lysine biosynthesis via DAP pathway; LL-2,6-diaminopimelate from (S)-tetrahydrodipicolinate (acetylase route): step 1/3. Catalyzes the transfer of an acetyl group from acetyl-CoA to tetrahydrodipicolinate. The sequence is that of 2,3,4,5-tetrahydropyridine-2,6-dicarboxylate N-acetyltransferase from Kosmotoga olearia (strain ATCC BAA-1733 / DSM 21960 / TBF 19.5.1).